The chain runs to 962 residues: Leucine-rich repeat-containing G-protein coupled receptor 6 (962 aa).

A signal peptide spans 1–16 (MLVVLLILHAVSCAHS). The LRRNT domain occupies 20–60 (PGAAVPVKQCPSACQCEEDGILLLVDCSEQGLSSVPTDLSP). LRR repeat units lie at residues 38–58 (DGIL…PTDL), 59–82 (SPLT…AFRN), 83–106 (LHFL…MLQG), 107–131 (LYNL…PWEL), 133–154 (NLLS…TLSG), 155–178 (MRSL…ALND), 179–202 (LSSL…AFRN), 203–226 (LSNL…CFEG), 228–250 (HSLE…IRTL), 251–273 (AKLQ…AFVG), 275–297 (PLLQ…AFQF), 298–321 (LPKL…LKGT), 322–344 (TSLQ…LCHL), 345–368 (LPKL…YHCT), 370–390 (LQEI…TFQQ), 391–414 (LGSL…AFFS), and 416–438 (QSLI…GLTS). An N-linked (GlcNAc...) asparagine glycan is attached at N71. A glycan (N-linked (GlcNAc...) asparagine) is linked at N202. 7 helical membrane-spanning segments follow: residues 559-579 (GMWL…LTVF), 590-610 (FIIG…GTLA), 647-669 (SILF…RAYG), 679-699 (AAAV…LIGV), 723-743 (FMVA…GTYI), 766-786 (VAWL…LTFS), and 801-821 (SVVL…YLLF). The cysteines at positions 633 and 708 are disulfide-linked.

Belongs to the G-protein coupled receptor 1 family.

The protein localises to the cell membrane. Its function is as follows. Receptor for R-spondins that potentiates the canonical Wnt signaling pathway. Upon binding to R-spondins (rspo1, rspo2, rspo3 or rspo4), associates with phosphorylated lrp6 and frizzled receptors that are activated by extracellular Wnt receptors, triggering the canonical Wnt signaling pathway to increase expression of target genes. In contrast to classical G-protein coupled receptors, does not activate heterotrimeric G-proteins to transduce the signal. The polypeptide is Leucine-rich repeat-containing G-protein coupled receptor 6 (lgr6) (Danio rerio (Zebrafish)).